The primary structure comprises 958 residues: Glycine dehydrogenase (decarboxylating) (958 aa).

N6-(pyridoxal phosphate)lysine is present on Lys-705.

This sequence belongs to the GcvP family. In terms of assembly, the glycine cleavage system is composed of four proteins: P, T, L and H. The cofactor is pyridoxal 5'-phosphate.

It carries out the reaction N(6)-[(R)-lipoyl]-L-lysyl-[glycine-cleavage complex H protein] + glycine + H(+) = N(6)-[(R)-S(8)-aminomethyldihydrolipoyl]-L-lysyl-[glycine-cleavage complex H protein] + CO2. Its function is as follows. The glycine cleavage system catalyzes the degradation of glycine. The P protein binds the alpha-amino group of glycine through its pyridoxal phosphate cofactor; CO(2) is released and the remaining methylamine moiety is then transferred to the lipoamide cofactor of the H protein. This is Glycine dehydrogenase (decarboxylating) from Synechococcus sp. (strain CC9902).